The following is a 554-amino-acid chain: L-ascorbate oxidase homolog (554 aa).

A signal peptide spans 1 to 21 (MGSGKVTFVALLLCLSVGVIA). Plastocyanin-like domains follow at residues 22 to 143 (EDPY…LNVH) and 196 to 296 (SAKV…AIIR). N-linked (GlcNAc...) asparagine glycosylation is found at asparagine 31, asparagine 59, and asparagine 108. Cysteine 101 and cysteine 540 are disulfide-bonded. N-linked (GlcNAc...) asparagine glycosylation is found at asparagine 332, asparagine 352, and asparagine 423. In terms of domain architecture, Plastocyanin-like 3 spans 411-521 (DPSKLTIATN…LGEQLYFSVL (111 aa)).

It belongs to the multicopper oxidase family. In terms of tissue distribution, pollen.

Its subcellular location is the secreted. It is found in the extracellular space. In terms of biological role, probable oxidoreductase that may be involved in pollen tube growth. The sequence is that of L-ascorbate oxidase homolog from Nicotiana tabacum (Common tobacco).